Reading from the N-terminus, the 192-residue chain is uncharacterized protein (192 aa).

A helical; Signal-anchor transmembrane segment spans residues 7–29; the sequence is FIHSISGGSSLLSASEVFASAFF. A helical membrane pass occupies residues 51–67; the sequence is YFLCVLVSTFLNSLVII.

Its subcellular location is the membrane. This is an uncharacterized protein from Saccharomyces cerevisiae (strain ATCC 204508 / S288c) (Baker's yeast).